The chain runs to 529 residues: Serine hydroxymethyltransferase 3, chloroplastic (529 aa).

A chloroplast-targeting transit peptide spans Met-1 to Arg-60. N6-(pyridoxal phosphate)lysine is present on Lys-314.

The protein belongs to the SHMT family. In terms of assembly, homotetramer. Pyridoxal 5'-phosphate is required as a cofactor.

It localises to the plastid. The protein localises to the chloroplast. It catalyses the reaction (6R)-5,10-methylene-5,6,7,8-tetrahydrofolate + glycine + H2O = (6S)-5,6,7,8-tetrahydrofolate + L-serine. It functions in the pathway one-carbon metabolism; tetrahydrofolate interconversion. Inhibited by 5-CH3-H4PteGlu1/5 and 5-HCO-H4PteGlu1/5 in vitro. Its function is as follows. Catalyzes the interconversion of serine and glycine and directs the hydroxymethyl moiety of serine into the metabolic network of H4PteGlu(n)-bound one-carbon units. This chain is Serine hydroxymethyltransferase 3, chloroplastic, found in Arabidopsis thaliana (Mouse-ear cress).